We begin with the raw amino-acid sequence, 182 residues long: Crossover junction endodeoxyribonuclease RuvC (182 aa).

Residues Asp7, Glu69, and Asp141 contribute to the active site. Residues Asp7, Glu69, and Asp141 each coordinate Mg(2+).

It belongs to the RuvC family. In terms of assembly, homodimer which binds Holliday junction (HJ) DNA. The HJ becomes 2-fold symmetrical on binding to RuvC with unstacked arms; it has a different conformation from HJ DNA in complex with RuvA. In the full resolvosome a probable DNA-RuvA(4)-RuvB(12)-RuvC(2) complex forms which resolves the HJ. Mg(2+) serves as cofactor.

It localises to the cytoplasm. It catalyses the reaction Endonucleolytic cleavage at a junction such as a reciprocal single-stranded crossover between two homologous DNA duplexes (Holliday junction).. In terms of biological role, the RuvA-RuvB-RuvC complex processes Holliday junction (HJ) DNA during genetic recombination and DNA repair. Endonuclease that resolves HJ intermediates. Cleaves cruciform DNA by making single-stranded nicks across the HJ at symmetrical positions within the homologous arms, yielding a 5'-phosphate and a 3'-hydroxyl group; requires a central core of homology in the junction. The consensus cleavage sequence is 5'-(A/T)TT(C/G)-3'. Cleavage occurs on the 3'-side of the TT dinucleotide at the point of strand exchange. HJ branch migration catalyzed by RuvA-RuvB allows RuvC to scan DNA until it finds its consensus sequence, where it cleaves and resolves the cruciform DNA. The protein is Crossover junction endodeoxyribonuclease RuvC of Albidiferax ferrireducens (strain ATCC BAA-621 / DSM 15236 / T118) (Rhodoferax ferrireducens).